Here is a 213-residue protein sequence, read N- to C-terminus: Pyrrolidone-carboxylate peptidase (213 aa).

Catalysis depends on residues Glu-80, Cys-143, and His-166.

This sequence belongs to the peptidase C15 family. In terms of assembly, homotetramer.

Its subcellular location is the cytoplasm. It carries out the reaction Release of an N-terminal pyroglutamyl group from a polypeptide, the second amino acid generally not being Pro.. Its function is as follows. Removes 5-oxoproline from various penultimate amino acid residues except L-proline. This is Pyrrolidone-carboxylate peptidase from Clavibacter michiganensis subsp. michiganensis (strain NCPPB 382).